Reading from the N-terminus, the 335-residue chain is Probable cytosolic iron-sulfur protein assembly protein Ciao1 (335 aa).

WD repeat units follow at residues 12–51 (GHKG…WSTK), 57–96 (GHKR…FECN), 101–140 (GHEN…EFEC), 146–185 (PHTQ…NDWD), 192–231 (SHTS…NTAG), 250–289 (QHSR…KPDE), and 301–335 (AHDQ…KVSE).

Belongs to the WD repeat CIA1 family.

Its function is as follows. Essential component of the cytosolic iron-sulfur (Fe/S) protein assembly machinery. Required for the maturation of extramitochondrial Fe/S proteins. In Drosophila simulans (Fruit fly), this protein is Probable cytosolic iron-sulfur protein assembly protein Ciao1.